Here is a 341-residue protein sequence, read N- to C-terminus: N-acetyl-gamma-glutamyl-phosphate reductase (341 aa).

C151 is an active-site residue.

The protein belongs to the NAGSA dehydrogenase family. Type 1 subfamily.

Its subcellular location is the cytoplasm. The enzyme catalyses N-acetyl-L-glutamate 5-semialdehyde + phosphate + NADP(+) = N-acetyl-L-glutamyl 5-phosphate + NADPH + H(+). It participates in amino-acid biosynthesis; L-arginine biosynthesis; N(2)-acetyl-L-ornithine from L-glutamate: step 3/4. Its function is as follows. Catalyzes the NADPH-dependent reduction of N-acetyl-5-glutamyl phosphate to yield N-acetyl-L-glutamate 5-semialdehyde. The protein is N-acetyl-gamma-glutamyl-phosphate reductase of Chlorobaculum tepidum (strain ATCC 49652 / DSM 12025 / NBRC 103806 / TLS) (Chlorobium tepidum).